A 295-amino-acid chain; its full sequence is Nucleotide-binding protein BH3569 (295 aa).

14-21 is an ATP binding site; that stretch reads GMSGAGKT. 65–68 is a GTP binding site; that stretch reads DLRG.

It belongs to the RapZ-like family.

Displays ATPase and GTPase activities. The protein is Nucleotide-binding protein BH3569 of Halalkalibacterium halodurans (strain ATCC BAA-125 / DSM 18197 / FERM 7344 / JCM 9153 / C-125) (Bacillus halodurans).